A 667-amino-acid polypeptide reads, in one-letter code: Probable sulfate permease C320.05 (667 aa).

Residues 1–27 (MSSPSENHLLGPKTSFIDNRTSTSRPL) are disordered. A compositionally biased stretch (polar residues) spans 16-25 (FIDNRTSTSR). The next 12 helical transmembrane spans lie at 77 to 97 (IIWD…IALS), 102 to 122 (FLGV…ILYC), 162 to 182 (ILVT…AGLF), 198 to 218 (GCIL…FFGF), 240 to 260 (MSKA…LLIG), 275 to 295 (IVSI…SKKF), 301 to 321 (YGIA…LPLP), 336 to 356 (GVMC…AISL), 368 to 388 (LISL…PICG), 405 to 425 (VATI…MPVF), 433 to 453 (LASM…VEIF), and 465 to 485 (GIIF…GIIF). Positions 532 to 657 (SSTAVESAPR…DHVQDSIKKV (126 aa)) constitute an STAS domain.

This sequence belongs to the SLC26A/SulP transporter (TC 2.A.53) family.

The protein resides in the endoplasmic reticulum membrane. Its function is as follows. Possible sulfate transporter. The chain is Probable sulfate permease C320.05 from Schizosaccharomyces pombe (strain 972 / ATCC 24843) (Fission yeast).